A 343-amino-acid polypeptide reads, in one-letter code: Glucan endo-1,3-beta-glucosidase, acidic isoform GI9 (343 aa).

A signal peptide spans 1–29 (MTLCIKNGFLAAALVLVGLLICSIQMIGA). Q30 is modified (pyrrolidone carboxylic acid). Catalysis depends on E124, which acts as the Proton donor. E264 (nucleophile) is an active-site residue.

This sequence belongs to the glycosyl hydrolase 17 family.

The protein resides in the secreted. It localises to the extracellular space. The catalysed reaction is Hydrolysis of (1-&gt;3)-beta-D-glucosidic linkages in (1-&gt;3)-beta-D-glucans.. Its function is as follows. Implicated in the defense of plants against pathogens. This chain is Glucan endo-1,3-beta-glucosidase, acidic isoform GI9 (PR2), found in Nicotiana tabacum (Common tobacco).